We begin with the raw amino-acid sequence, 660 residues long: Probable Xaa-Pro aminopeptidase PTRG_10574 (660 aa).

Mn(2+) is bound by residues Asp-274, Asp-285, Glu-435, and Glu-476. Residues 641-660 are disordered; it reads SAGSGSTPLWKPHNKQDKKN.

The protein belongs to the peptidase M24B family. The cofactor is Mn(2+).

It carries out the reaction Release of any N-terminal amino acid, including proline, that is linked to proline, even from a dipeptide or tripeptide.. Its function is as follows. Catalyzes the removal of a penultimate prolyl residue from the N-termini of peptides. The chain is Probable Xaa-Pro aminopeptidase PTRG_10574 from Pyrenophora tritici-repentis (strain Pt-1C-BFP) (Wheat tan spot fungus).